The chain runs to 508 residues: Photosystem II CP47 reaction center protein (508 aa).

Helical transmembrane passes span 21-36 (AVHL…WAGS), 101-115 (IVLS…IWHW), 140-156 (GIHL…FGAF), 203-218 (IAAG…FHLS), 237-252 (VLSS…AFVV), and 457-472 (CFAL…HGSR).

It belongs to the PsbB/PsbC family. PsbB subfamily. As to quaternary structure, PSII is composed of 1 copy each of membrane proteins PsbA, PsbB, PsbC, PsbD, PsbE, PsbF, PsbH, PsbI, PsbJ, PsbK, PsbL, PsbM, PsbT, PsbX, PsbY, PsbZ, Psb30/Ycf12, at least 3 peripheral proteins of the oxygen-evolving complex and a large number of cofactors. It forms dimeric complexes. Binds multiple chlorophylls. PSII binds additional chlorophylls, carotenoids and specific lipids. serves as cofactor.

It is found in the plastid. The protein resides in the chloroplast thylakoid membrane. One of the components of the core complex of photosystem II (PSII). It binds chlorophyll and helps catalyze the primary light-induced photochemical processes of PSII. PSII is a light-driven water:plastoquinone oxidoreductase, using light energy to abstract electrons from H(2)O, generating O(2) and a proton gradient subsequently used for ATP formation. The chain is Photosystem II CP47 reaction center protein from Zygnema circumcarinatum (Green alga).